The primary structure comprises 121 residues: Nitrogen fixation nifHD region glnB-like protein 2 (121 aa).

The protein belongs to the P(II) protein family.

In terms of biological role, could be involved in the regulation of nitrogen fixation. This is Nitrogen fixation nifHD region glnB-like protein 2 (glnBII) from Methanococcus maripaludis (Methanococcus deltae).